The primary structure comprises 197 residues: Peptidyl-tRNA hydrolase (197 aa).

TRNA is bound at residue Y17. The Proton acceptor role is filled by H22. TRNA contacts are provided by F68, N70, and N116.

It belongs to the PTH family. In terms of assembly, monomer.

The protein localises to the cytoplasm. The enzyme catalyses an N-acyl-L-alpha-aminoacyl-tRNA + H2O = an N-acyl-L-amino acid + a tRNA + H(+). Its function is as follows. Hydrolyzes ribosome-free peptidyl-tRNAs (with 1 or more amino acids incorporated), which drop off the ribosome during protein synthesis, or as a result of ribosome stalling. In terms of biological role, catalyzes the release of premature peptidyl moieties from peptidyl-tRNA molecules trapped in stalled 50S ribosomal subunits, and thus maintains levels of free tRNAs and 50S ribosomes. The protein is Peptidyl-tRNA hydrolase of Yersinia enterocolitica serotype O:8 / biotype 1B (strain NCTC 13174 / 8081).